The primary structure comprises 62 residues: Weak neurotoxin 5 (62 aa).

5 disulfides stabilise this stretch: Cys-3/Cys-24, Cys-6/Cys-11, Cys-17/Cys-40, Cys-44/Cys-54, and Cys-55/Cys-60.

This sequence belongs to the three-finger toxin family. Ancestral subfamily. Orphan group II sub-subfamily. As to expression, expressed by the venom gland.

It localises to the secreted. Its function is as follows. Binds with low affinity to muscular (alpha-1-beta-1-delta-epsilon/CHRNA1-CHRNB1-CHRND-CHRNE) and very low affinity to neuronal (alpha-7/CHRNA7) nicotinic acetylcholine receptor (nAChR). This Naja naja (Indian cobra) protein is Weak neurotoxin 5.